The primary structure comprises 341 residues: Ribonucleoside-diphosphate reductase subunit beta (341 aa).

Fe cation contacts are provided by Asp-89, Glu-120, and His-123. The active site involves Tyr-127. Fe cation-binding residues include Glu-185, Glu-219, and His-222.

It belongs to the ribonucleoside diphosphate reductase small chain family. In terms of assembly, tetramer of two alpha and two beta subunits. Fe cation is required as a cofactor.

It catalyses the reaction a 2'-deoxyribonucleoside 5'-diphosphate + [thioredoxin]-disulfide + H2O = a ribonucleoside 5'-diphosphate + [thioredoxin]-dithiol. Its function is as follows. Provides the precursors necessary for DNA synthesis. Catalyzes the biosynthesis of deoxyribonucleotides from the corresponding ribonucleotides. In Helicobacter pylori (strain J99 / ATCC 700824) (Campylobacter pylori J99), this protein is Ribonucleoside-diphosphate reductase subunit beta (nrdB).